Reading from the N-terminus, the 101-residue chain is Urease subunit beta (101 aa).

This sequence belongs to the urease beta subunit family. As to quaternary structure, heterotrimer of UreA (gamma), UreB (beta) and UreC (alpha) subunits. Three heterotrimers associate to form the active enzyme.

It localises to the cytoplasm. The catalysed reaction is urea + 2 H2O + H(+) = hydrogencarbonate + 2 NH4(+). It participates in nitrogen metabolism; urea degradation; CO(2) and NH(3) from urea (urease route): step 1/1. This Nostoc punctiforme (strain ATCC 29133 / PCC 73102) protein is Urease subunit beta.